The sequence spans 470 residues: Homogentisate 1,2-dioxygenase (470 aa).

His-356, Glu-362, and His-392 together coordinate Fe cation.

It belongs to the homogentisate dioxygenase family. Fe cation is required as a cofactor.

The catalysed reaction is homogentisate + O2 = 4-maleylacetoacetate + H(+). It functions in the pathway amino-acid degradation; L-phenylalanine degradation; acetoacetate and fumarate from L-phenylalanine: step 4/6. The polypeptide is Homogentisate 1,2-dioxygenase (HGO) (Oryza sativa subsp. japonica (Rice)).